We begin with the raw amino-acid sequence, 426 residues long: Protein prenyltransferase alpha subunit repeat-containing protein 1 (426 aa).

4 PFTA repeats span residues 86–119 (ALVD…VLNP), 121–154 (KDLY…QKEC), 180–213 (EEMR…AKGN), and 219–252 (DELS…AKEL). Positions 255-279 (AAEKDVHTSQQPNGENTATASDDNH) are disordered. Residues 262–275 (TSQQPNGENTATAS) show a composition bias toward polar residues. The stretch at 290–323 (EEIQLCTDLIESYPGHETLWCHRRHVFYLWHQWR) is one PFTA 5 repeat.

This sequence belongs to the protein prenyltransferase subunit alpha family.

In Danio rerio (Zebrafish), this protein is Protein prenyltransferase alpha subunit repeat-containing protein 1 (ptar1).